We begin with the raw amino-acid sequence, 267 residues long: LysM and putative peptidoglycan-binding domain-containing protein 4 (267 aa).

Residues 1-211 lie on the Extracellular side of the membrane; that stretch reads MRRGDPPPRA…RSNGADWGIQ (211 aa). A disordered region spans residues 30–64; the sequence is HRQEEPEASSEDEELNVMELRPRSRDSSSKEKEGV. The segment covering 35–45 has biased composition (acidic residues); the sequence is PEASSEDEELN. A compositionally biased stretch (basic and acidic residues) spans 49–64; the sequence is LRPRSRDSSSKEKEGV. The LysM domain occupies 70-114; it reads LERDISHEDNLSKLALQYGCKVADIKRVNNLFQEQDMYALKSIKI. The N-linked (GlcNAc...) asparagine glycan is linked to asparagine 79. Residues 130-152 are disordered; sequence RTPQQRPSHDAAPSNSAMASVSG. Residues 142–152 show a composition bias toward polar residues; sequence PSNSAMASVSG. The helical transmembrane segment at 212-232 threads the bilayer; the sequence is WWNAVIAMLLIGIVLPIFYVV. At 233 to 267 the chain is on the cytoplasmic side; it reads YYKTKDSGESAVDNVGVNISVSTSNSTREYNGKSP.

The protein resides in the membrane. This is LysM and putative peptidoglycan-binding domain-containing protein 4 (lysmd4) from Danio rerio (Zebrafish).